A 463-amino-acid chain; its full sequence is HEPACAM family member 2 (463 aa).

The first 32 residues, 1 to 32, serve as a signal peptide directing secretion; sequence MGQDAFMELLRSMVGLSLCKIHLLLIAGSCLG. Residues N86, N130, and N166 are each glycosylated (N-linked (GlcNAc...) asparagine). Ig-like C2-type domains are found at residues 150–234 and 236–332; these read PMVQ…SDII and PTIY…TRFT. Cystine bridges form between C171/C220 and C271/C316. N321 is a glycosylation site (N-linked (GlcNAc...) asparagine). Residues 353–373 form a helical membrane-spanning segment; the sequence is LASITGISLFLIISMCLLFLW. The Cytoplasmic segment spans residues 374–463; sequence KKYQPYKAIR…IPEQQQENTE (90 aa).

Poly-ADP-ribosylated (PARsylated) by tankyrase TNKS during late G2 and prophase, leading to translocation to mitotic centrosomes. In terms of processing, N-glycosylated.

The protein localises to the golgi apparatus membrane. It is found in the cytoplasm. The protein resides in the cytoskeleton. It localises to the spindle. Its subcellular location is the microtubule organizing center. The protein localises to the centrosome. It is found in the midbody. Its function is as follows. Required during prometaphase for centrosome maturation. Following poly-ADP-ribosylation (PARsylation) by TNKS, translocates from the Golgi apparatus to mitotic centrosomes and plays a key role in the formation of robust microtubules for prompt movement of chromosomes: anchors AKAP9/CG-NAP, a scaffold protein of the gamma-tubulin ring complex and promotes centrosome maturation. The chain is HEPACAM family member 2 (Hepacam2) from Mus musculus (Mouse).